A 137-amino-acid chain; its full sequence is Transcription antitermination protein NusB (137 aa).

It belongs to the NusB family.

Functionally, involved in transcription antitermination. Required for transcription of ribosomal RNA (rRNA) genes. Binds specifically to the boxA antiterminator sequence of the ribosomal RNA (rrn) operons. The chain is Transcription antitermination protein NusB from Haemophilus ducreyi (strain 35000HP / ATCC 700724).